An 858-amino-acid chain; its full sequence is Heat shock protein 105 kDa (858 aa).

Serine 2 is subject to N-acetylserine. Residue lysine 471 is modified to N6-acetyllysine. Disordered regions lie at residues 500 to 585 (KVPT…PPEA) and 801 to 858 (VTQP…MDLD). Over residues 504-515 (EEEDGSSVEADM) the composition is skewed to acidic residues. 2 positions are modified to phosphoserine: serine 509 and serine 510. Residues 533-555 (QQDNSEAGTQPQVQTDGQQTSQS) show a composition bias toward polar residues. Residue serine 558 is modified to Phosphoserine. The residue at position 562 (threonine 562) is a Phosphothreonine. 2 stretches are compositionally biased toward basic and acidic residues: residues 564-585 (EENK…PPEA) and 806-815 (PKIESPKLER). The residue at position 810 (serine 810) is a Phosphoserine. Threonine 816 bears the Phosphothreonine mark.

It belongs to the heat shock protein 70 family. In terms of assembly, interacts with HSPA8/HSC70. Interacts with HSPA1A (via NBD) and HSPA1B (via NBD). In terms of processing, phosphorylation on Ser-509 may be important for regulation of the HSPA8/HSC70 chaperone activity.

Its subcellular location is the cytoplasm. In terms of biological role, acts as a nucleotide-exchange factor (NEF) for chaperone proteins HSPA1A and HSPA1B, promoting the release of ADP from HSPA1A/B thereby triggering substrate release. Prevents the aggregation of denatured proteins in cells under severe stress, on which the ATP levels decrease markedly. Inhibits HSPA8/HSC70 ATPase and chaperone activities. This is Heat shock protein 105 kDa (Hsph1) from Rattus norvegicus (Rat).